We begin with the raw amino-acid sequence, 521 residues long: Cytoplasmic polyadenylation element-binding protein 2 (521 aa).

The segment covering 1–11 (MNLPQQQPPAA) has biased composition (pro residues). Disordered stretches follow at residues 1–35 (MNLP…QAAA) and 50–88 (PLLK…NMGI). The span at 12–35 (APQQPQSRRSPVSPQLQQQHQAAA) shows a compositional bias: low complexity. S21 carries the phosphoserine modification. The span at 55–70 (SPWSNHQNSGWGTASM) shows a compositional bias: polar residues. 2 consecutive RRM domains span residues 264–355 (RKVF…PWNL) and 372–454 (KTIF…PYVL).

It belongs to the RRM CPEB family. As to quaternary structure, interacts with TENT2/GLD2. In terms of tissue distribution, expressed in embryo, cerebellum, salivary gland, thymus, heart, liver, lung, spleen, kidney, intestine, ovary and round spermatids. Weakly expressed in granular cells of dentate gyrus and the pyramidal cells of CA3 and CA1 of the hippocampus.

Its subcellular location is the cytoplasm. May play a role in translational regulation of stored mRNAs in transcriptionally inactive haploid spermatids. Binds to poly(U) RNA oligomers. Required for cell cycle progression, specifically for the transition from metaphase to anaphase. The protein is Cytoplasmic polyadenylation element-binding protein 2 (Cpeb2) of Mus musculus (Mouse).